Here is a 98-residue protein sequence, read N- to C-terminus: NADH-ubiquinone oxidoreductase chain 4L (98 aa).

The next 3 membrane-spanning stretches (helical) occupy residues Met1–Met21, Ala29–Leu49, and Ile61–Ile81.

This sequence belongs to the complex I subunit 4L family. As to quaternary structure, core subunit of respiratory chain NADH dehydrogenase (Complex I) which is composed of 45 different subunits.

It localises to the mitochondrion inner membrane. It catalyses the reaction a ubiquinone + NADH + 5 H(+)(in) = a ubiquinol + NAD(+) + 4 H(+)(out). Functionally, core subunit of the mitochondrial membrane respiratory chain NADH dehydrogenase (Complex I) which catalyzes electron transfer from NADH through the respiratory chain, using ubiquinone as an electron acceptor. Part of the enzyme membrane arm which is embedded in the lipid bilayer and involved in proton translocation. This chain is NADH-ubiquinone oxidoreductase chain 4L (MT-ND4L), found in Eubalaena australis (Southern right whale).